The following is a 183-amino-acid chain: Capsid protein (183 aa).

Residues 136–183 (NAPILSTLPETTVVRRRGRSPRRRTPSPRRRRSQSPRRRRSQSRESQC) form a disordered region. Over residues 149 to 176 (VRRRGRSPRRRTPSPRRRRSQSPRRRRS) the composition is skewed to basic residues. Phosphoserine; by host occurs at positions 155, 162, and 170. The 1; half-length repeat unit spans residues 155-161 (SPRRRTP). Residues 155–177 (SPRRRTPSPRRRRSQSPRRRRSQ) form a 3 X 8 AA repeats of S-P-R-R-R-[PR]-S-Q region. Residues 158–175 (RRTPSPRRRRSQSPRRRR) carry the Bipartite nuclear localization signal motif. Tandem repeats lie at residues 162–169 (SPRRRRSQ) and 170–177 (SPRRRRSQ). The interval 177-183 (QSRESQC) is RNA binding.

It belongs to the orthohepadnavirus core antigen family. Homodimerizes, then multimerizes. Interacts with cytosol exposed regions of viral L glycoprotein present in the reticulum-to-Golgi compartment. Interacts with human FLNB. Phosphorylated form interacts with host importin alpha; this interaction depends on the exposure of the NLS, which itself depends upon genome maturation and/or phosphorylation of the capsid protein. Interacts with host NUP153. Post-translationally, phosphorylated by host SRPK1, SRPK2, and maybe protein kinase C or GAPDH. Phosphorylation is critical for pregenomic RNA packaging. Protein kinase C phosphorylation is stimulated by HBx protein and may play a role in transport of the viral genome to the nucleus at the late step during the viral replication cycle.

It is found in the virion. Its subcellular location is the host cytoplasm. Self assembles to form an icosahedral capsid. Most capsids appear to be large particles with an icosahedral symmetry of T=4 and consist of 240 copies of capsid protein, though a fraction forms smaller T=3 particles consisting of 180 capsid proteins. Entering capsids are transported along microtubules to the nucleus. Phosphorylation of the capsid is thought to induce exposure of nuclear localization signal in the C-terminal portion of the capsid protein that allows binding to the nuclear pore complex via the importin (karyopherin-) alpha and beta. Capsids are imported in intact form through the nuclear pore into the nuclear basket, where it probably binds NUP153. Only capsids that contain the mature viral genome can release the viral DNA and capsid protein into the nucleoplasm. Immature capsids get stuck in the basket. Capsids encapsulate the pre-genomic RNA and the P protein. Pre-genomic RNA is reverse-transcribed into DNA while the capsid is still in the cytoplasm. The capsid can then either be directed to the nucleus, providing more genomes for transcription, or bud through the endoplasmic reticulum to provide new virions. This chain is Capsid protein, found in Homo sapiens (Human).